Consider the following 189-residue polypeptide: Peptidyl-tRNA hydrolase (189 aa).

TRNA is bound at residue tyrosine 15. Histidine 20 functions as the Proton acceptor in the catalytic mechanism. 3 residues coordinate tRNA: phenylalanine 66, asparagine 68, and asparagine 114.

This sequence belongs to the PTH family. As to quaternary structure, monomer.

The protein localises to the cytoplasm. The catalysed reaction is an N-acyl-L-alpha-aminoacyl-tRNA + H2O = an N-acyl-L-amino acid + a tRNA + H(+). Its function is as follows. Hydrolyzes ribosome-free peptidyl-tRNAs (with 1 or more amino acids incorporated), which drop off the ribosome during protein synthesis, or as a result of ribosome stalling. Functionally, catalyzes the release of premature peptidyl moieties from peptidyl-tRNA molecules trapped in stalled 50S ribosomal subunits, and thus maintains levels of free tRNAs and 50S ribosomes. This is Peptidyl-tRNA hydrolase from Acidithiobacillus ferrooxidans (strain ATCC 23270 / DSM 14882 / CIP 104768 / NCIMB 8455) (Ferrobacillus ferrooxidans (strain ATCC 23270)).